The chain runs to 1401 residues: Alpha-latrotoxin-Lt1a (1401 aa).

The signal sequence occupies residues 1 to 20; the sequence is MISVGEIMERANHSLVRMRR. Residues 17–20 form a furin-like endopeptidase recognition region region; that stretch reads RMRR. The interval 238–257 is helix H8 is the probable transmembrane region of the tetrameric pore inserted in the target cell membrane; it reads VLYALLYGTQTYVSVMFFLL. Cys-413 and Cys-1066 are disulfide-bonded. 22 ANK repeats span residues 458-489, 490-521, 525-554, 559-589, 593-622, 626-656, 660-690, 695-723, 729-758, 762-791, 795-824, 828-857, 862-891, 895-924, 928-957, 971-1003, 1004-1033, 1035-1064, 1068-1097, 1101-1131, 1137-1166, and 1170-1199; these read LYNA…ATFD, HGRT…ELNQ, KGYT…SINS, FLQT…NINE, DGFT…DVNA, TGLT…DINA, NNIT…NANV, GLLS…NVNV, GGIT…NIEQ, EKYT…NFEA, SGAT…NWRD, NGQM…TVVD, NSDT…DINT, KGLA…NVYI, DGMN…KFEW, EECA…GNFA, ICGP…SVDG, KTDT…KVNH, NGMT…DFRR, RGTT…DINI, DKDT…DVTI, and YDKT…KFRR. Residues 1026–1032 form a 4C4.1 epitope region; the sequence is EEFLSVD. Positions 1196-1199 are furin-like endopeptidase recognition region; that stretch reads KFRR. A propeptide spanning residues 1200–1401 is cleaved from the precursor; it reads EYKSSYGERS…SDGILTKKLM (202 aa).

Belongs to the cationic peptide 01 (latrotoxin) family. 03 (alpha-latrotoxin) subfamily. In terms of assembly, homotetramer in membranes. In terms of processing, processed by furin-like proteases at both the N- and C-termini. In terms of tissue distribution, expressed in venom gland, cephalothorax, and abdomen tissues from both males and females.

It localises to the secreted. The protein localises to the target cell membrane. Presynaptic neurotoxin that causes massive release of neurotransmitters from vertebrate (but not invertebrate) nerve terminals and endocrine cells via a complex mechanism involving activation of receptor(s) and toxin insertion into the plasma membrane with subsequent pore formation. Binds to neurexin-1-alpha (NRXN1) in a calcium dependent manner, adhesion G protein-coupled receptor L1 (ADGRL1, also termed latrophilin-1 and calcium-independent receptor of latrotoxin (CIRL)), and receptor-type tyrosine-protein phosphatase S (PTPRS), also termed PTP sigma. NRXN1 and PTPRS are suggested to provide a platform for binding and subsequent pore formation events. In contrast, binding to ADGRL1 does not involve oligomerization and channel formation, but direct downstream stimulation of the synaptic fusion machinery. The polypeptide is Alpha-latrotoxin-Lt1a (Latrodectus tredecimguttatus (Mediterranean black widow spider)).